We begin with the raw amino-acid sequence, 580 residues long: Ran GTPase-activating protein 1 (580 aa).

LRR repeat units lie at residues 48 to 71 (YEGL…AIAE), 111 to 134 (GAQL…GFEA), 141 to 168 (CFTL…ALTE), 207 to 230 (IGTL…ALAE), 235 to 258 (NSLL…AMAE), 292 to 315 (LHKL…SLAE), and 320 to 343 (KSDL…QVQE). Residues 356–429 (SLSDDEDEDD…PPKLPVDAST (74 aa)) form a disordered region. A compositionally biased stretch (acidic residues) spans 358–399 (SDDEDEDDDDDDEDDDDDEDDENDDEEVEEEEEEVEEEEGGD).

This sequence belongs to the RNA1 family. In terms of assembly, homodimer. Identified in a complex with RANBP2 and the ubiquitin-conjugating enzyme E2 (UBE2I). May be sumoylated.

Its subcellular location is the cytoplasm. It localises to the nucleus. It is found in the nucleoplasm. The protein localises to the nucleus envelope. The protein resides in the chromosome. Its subcellular location is the centromere. It localises to the kinetochore. It is found in the cytoskeleton. The protein localises to the spindle. Its function is as follows. GTPase activator for RAN, converting it to the GDP-bound state. Converts cytoplasmic GTP-bound RAN to GDP-bound RAN, which is required for RAN-mediated nuclear import and export. The chain is Ran GTPase-activating protein 1 (rangap1) from Xenopus laevis (African clawed frog).